Here is a 1026-residue protein sequence, read N- to C-terminus: Maternal effect protein staufen (1026 aa).

The segment covering 16-29 has biased composition (basic residues); the sequence is AAHHHSHSHAHMHL. Disordered regions lie at residues 16–159, 190–210, and 234–311; these read AAHH…QLPP, NHYG…SNYA, and TPVP…KDKT. Positions 70–111 are enriched in low complexity; it reads AQQQQQQQTSSNQAGAVAAAGAAYHHGNINSNSGSNISSNSN. Residues 112–126 are compositionally biased toward polar residues; sequence QMQKIRQQHQHLSSS. 2 stretches are compositionally biased toward low complexity: residues 192 to 210 and 234 to 256; these read YGSN…SNYA and TPVP…NSTV. Residues 267–284 are compositionally biased toward basic and acidic residues; the sequence is TSQKPETRQEPASADDHV. Polar residues predominate over residues 285–303; the sequence is STGNIDATGALSNEDTSSS. 2 DRBM domains span residues 311–378 and 490–557; these read TPMC…ETMY and PKFP…VLKT. Ser563 and Ser570 each carry phosphoserine. The DRBM 3 domain occupies 578-645; sequence SPISQVHEIG…AEKMLVELQK (68 aa). RNA-binding residues include His606, Lys608, Lys628, Lys629, and Lys632. Residues 647–707 form a disordered region; it reads PPLTPTKQTP…PPKDKLIDMD (61 aa). Phosphothreonine is present on residues Thr650 and Thr655. A Phosphoserine modification is found at Ser676. Polar residues predominate over residues 678 to 688; sequence VSGTDGPTQTG. Residues 711 to 781 form the DRBM 4 domain; it reads NPITKLIQLQ…AQALFELLEA (71 aa). The disordered stretch occupies residues 855–948; sequence ESKEEEANKE…SNSTSNTQSA (94 aa). A compositionally biased stretch (low complexity) spans 864–890; it reads EVAVAAEENSNNSANSGDSSNSSSGDS. The span at 891–901 shows a compositional bias: polar residues; the sequence is QATEAASESAL. Composition is skewed to low complexity over residues 902-920 and 934-947; these read NTST…SNVG and NTES…NTQS. The 68-residue stretch at 951–1018 folds into the DRBM 5 domain; that stretch reads HMKEQLLYLS…ASNALKILSK (68 aa).

In terms of assembly, component of neuronal ribonucleoprotein complexes (RNPs) that contains at least various translational repressor and mRNA turnover proteins such as me31B, tral, Upf1, AGO2 and sometimes Fmr1. As to expression, polar granules at the posterior pole of the oocyte, and by the time the egg is laid, at the anterior pole.

The protein resides in the cytoplasm. The protein localises to the cytoplasmic ribonucleoprotein granule. Its function is as follows. RNA-binding protein which forms ribonucleoprotein complexes (RNPs) that play critical roles in the localization, translational repression and turnover of RNAs during embryogenesis, neurotransmission and neurogenesis. In the oocyte, essential for the localization of both the osk/oskar mRNA to the posterior pole and bcd/bicoid RNA to the anterior pole, and is therefore required for the correct anterior-posterior patterning of the developing embryo. Association with osk or bcd at their respective poles, appears to promote the formation and stabilization of the ribonucleoprotein complexes. Integral component of diverse neuritic ribonucleoprotein complexes (RNPs) that mediate the transport, translation and turnover of neuronal RNAs during neuorgenesis and the translation repression of synaptic transcripts in preparation for their dendritic targeting. In Drosophila melanogaster (Fruit fly), this protein is Maternal effect protein staufen (stau).